A 787-amino-acid polypeptide reads, in one-letter code: MDKEKEQTLEWNEAQKIDISVDLLAAAKKHLLFLGAVDRNRCLYDGPALQRAIYRYNAYWLPLLAQYTESSSICQGPLVPPLDCEWVWHCHRLNPVRYKTDCEQFYGRVLDNSGVVSSVNGNCKSQTETLWKRLYPTEPYDLDFANAISEPADVSALEKCTTYDLVLAVKRQSPFFYQVSRAHVDNDVFLQEAVARYKAFLYLIKGNRERSIKLFCVPTYDIDLIWHTHQLHAISYCNDLTKMIGKVLEHDDTDSDRSKGKKLDTGFSGTTAQWEETFGRRYWKAGAMNRGNTPKPVTTSPYVCSGKKSIAKEEESQNVIQYPEVKVIEVILEIVGVKNLPDAHKGKVFVLFSKTQPDSLFNAERRLTVLSESCGEKQVALFQCEPTGELSFQLMSSKSKSLGFTSLSFSEFLSPVTKLSVEKWLELTPTKRGKADDPNPISLRVAVSFTPPTRSPTVLHLVQARPSLKGSCFLPMLRKVRLAKSFTRVVDETETEVINLQMRNSNDAAPKGDRRQVIGVKECGETYVLAEYDGTFWSLLDSKWSLKQTCNPATDGPLFELSGTRMVKVYSGRKLEYEPKHCSKLRSEQDFMTAVEFSKQHPYGKAVGLLDLKFGSIEANEKWLVLPGMVSSFILSDLLKKEGFSAAAKDTVKANGITEESTEIDVLSQEKLEEETMMDVDTTTPVAVAAEKINGGARCFSKELSGNMIEEEGGHCGGCGGCGGCGGGGGCGGGGRCGGMTKIEGCGGGSCTGGSTGCGNCGGGCGNMMKNNANGNAPSVENDAVTA.

Expressed in leaves, inflorescences, buds, flowers and immature siliques.

In terms of biological role, involved in development and stress responses, probably through an auxin-dependent mechanism. The sequence is that of Glycine-rich domain-containing protein 2 from Arabidopsis thaliana (Mouse-ear cress).